Here is a 225-residue protein sequence, read N- to C-terminus: Rho GDP-dissociation inhibitor 3 (225 aa).

Belongs to the Rho GDI family. In terms of tissue distribution, primarily expressed in pancreas and brain.

It localises to the cytoplasm. In terms of biological role, inhibits GDP/GTP exchange reaction of RhoB. Interacts specifically with the GDP- and GTP-bound forms of post-translationally processed Rhob and Rhog proteins, both of which show a growth-regulated expression in mammalian cells. Stimulates the release of the GDP-bound but not the GTP-bound RhoB protein. Also inhibits the GDP/GTP exchange of RhoB but shows less ability to inhibit the dissociation of prebound GTP. The protein is Rho GDP-dissociation inhibitor 3 (ARHGDIG) of Homo sapiens (Human).